Reading from the N-terminus, the 189-residue chain is Putative lipoprotein LppK (189 aa).

Residues 1–22 (MRRNIRVTLGAATIVAALGLSG) form the signal peptide. Cys23 is lipidated: N-palmitoyl cysteine. Cys23 carries the S-diacylglycerol cysteine lipid modification. 2 disordered regions span residues 26-49 (PEFKRSSPPAPSLPPVTSSPLEAA) and 166-189 (MGNSPDSTPSATSPAPAPSPTPPG). Positions 169 to 179 (SPDSTPSATSP) are enriched in low complexity. The span at 180-189 (APAPSPTPPG) shows a compositional bias: pro residues.

This sequence belongs to the MTB12 family.

It is found in the cell membrane. The polypeptide is Putative lipoprotein LppK (lppK) (Mycobacterium tuberculosis (strain CDC 1551 / Oshkosh)).